Reading from the N-terminus, the 259-residue chain is NAD kinase (259 aa).

The active-site Proton acceptor is the Asp49. Residues 49–50, Arg54, 118–119, Asp148, Ala156, 159–164, and Ala183 contribute to the NAD(+) site; these read DG, NE, and TAYNYS.

Belongs to the NAD kinase family. The cofactor is a divalent metal cation.

It localises to the cytoplasm. The enzyme catalyses NAD(+) + ATP = ADP + NADP(+) + H(+). Involved in the regulation of the intracellular balance of NAD and NADP, and is a key enzyme in the biosynthesis of NADP. Catalyzes specifically the phosphorylation on 2'-hydroxyl of the adenosine moiety of NAD to yield NADP. The polypeptide is NAD kinase (Xylella fastidiosa (strain 9a5c)).